A 186-amino-acid polypeptide reads, in one-letter code: Sec-independent protein translocase protein TatB (186 aa).

A helical membrane pass occupies residues 1–21; sequence MFDIGFSELILLMVLGLVVLG. The tract at residues 162–186 is disordered; it reads LSSYYPPDDIEIAPASKSQSSKTKS. Residues 177–186 show a composition bias toward polar residues; sequence SKSQSSKTKS.

This sequence belongs to the TatB family. The Tat system comprises two distinct complexes: a TatABC complex, containing multiple copies of TatA, TatB and TatC subunits, and a separate TatA complex, containing only TatA subunits. Substrates initially bind to the TatABC complex, which probably triggers association of the separate TatA complex to form the active translocon.

Its subcellular location is the cell inner membrane. Part of the twin-arginine translocation (Tat) system that transports large folded proteins containing a characteristic twin-arginine motif in their signal peptide across membranes. Together with TatC, TatB is part of a receptor directly interacting with Tat signal peptides. TatB may form an oligomeric binding site that transiently accommodates folded Tat precursor proteins before their translocation. This is Sec-independent protein translocase protein TatB from Haemophilus influenzae (strain 86-028NP).